The chain runs to 446 residues: Ribosomal protein uS12 methylthiotransferase RimO (446 aa).

The MTTase N-terminal domain occupies 7–118 (PKIAFAHLGC…IVEVIERVER (112 aa)). Residues cysteine 16, cysteine 52, cysteine 81, cysteine 156, cysteine 160, and cysteine 163 each contribute to the [4Fe-4S] cluster site. The 230-residue stretch at 142–371 (TTPAPVAYLR…MELQQPIAQR (230 aa)) folds into the Radical SAM core domain. The TRAM domain occupies 374-440 (AAEVGKIVPV…IYDLYGIIPA (67 aa)).

This sequence belongs to the methylthiotransferase family. RimO subfamily. The cofactor is [4Fe-4S] cluster.

It localises to the cytoplasm. It carries out the reaction L-aspartate(89)-[ribosomal protein uS12]-hydrogen + (sulfur carrier)-SH + AH2 + 2 S-adenosyl-L-methionine = 3-methylsulfanyl-L-aspartate(89)-[ribosomal protein uS12]-hydrogen + (sulfur carrier)-H + 5'-deoxyadenosine + L-methionine + A + S-adenosyl-L-homocysteine + 2 H(+). In terms of biological role, catalyzes the methylthiolation of an aspartic acid residue of ribosomal protein uS12. The polypeptide is Ribosomal protein uS12 methylthiotransferase RimO (Thermosynechococcus vestitus (strain NIES-2133 / IAM M-273 / BP-1)).